Here is a 540-residue protein sequence, read N- to C-terminus: DNA-(apurinic or apyrimidinic site) endonuclease (540 aa).

Mg(2+) contacts are provided by Asn206 and Glu239. A disordered region spans residues 256–276 (NNKVYGGKKNEGEERNRGSVK). The span at 263–276 (KKNEGEERNRGSVK) shows a compositional bias: basic and acidic residues. Positions 400, 402, 530, and 531 each coordinate Mg(2+). His531 acts as the Proton acceptor in catalysis.

It belongs to the DNA repair enzymes AP/ExoA family. Requires Mg(2+) as cofactor. The cofactor is Mn(2+). May be proteolytically cleaved.

It is found in the mitochondrion. It carries out the reaction Exonucleolytic cleavage in the 3'- to 5'-direction to yield nucleoside 5'-phosphates.. Functionally, multifunctional protein that plays a central role in mitochondrial DNA base excision repair pathway induced by oxidative stress. Has apurinic/apyrimidinic (AP) endonuclease activity towards double-stranded DNA (dsDNA). Has nucleotide incision repair (NIR) activity; acts on dsDNA with oxidized bases thymine glycol and 5,6-dihydro-2'-deoxyuridine. Has 3'-5' exonuclease; can use dsDNA templates with 3'-OH termini including blunt-end, gapped and mismatched 3'-recessed. Has 3'-phosphatase activity; cleaves 3'-phosphate from blunt, recessed and gapped dsDNA templates, followed by 3'-5' exonuclease activity. Has RNase H-like activity; cleaves RNA on 3'-recessed RNA-DNA duplex. Plays a role in merosome infection of host erythrocytes. This chain is DNA-(apurinic or apyrimidinic site) endonuclease, found in Plasmodium berghei (strain Anka).